The primary structure comprises 430 residues: Serine--tRNA ligase (430 aa).

Residue 231-233 participates in L-serine binding; that stretch reads TSE. 262 to 264 contacts ATP; it reads RSE. Glu285 contacts L-serine. An ATP-binding site is contributed by 349–352; sequence EISS. Ser385 contacts L-serine.

Belongs to the class-II aminoacyl-tRNA synthetase family. Type-1 seryl-tRNA synthetase subfamily. Homodimer. The tRNA molecule binds across the dimer.

The protein localises to the cytoplasm. It catalyses the reaction tRNA(Ser) + L-serine + ATP = L-seryl-tRNA(Ser) + AMP + diphosphate + H(+). It carries out the reaction tRNA(Sec) + L-serine + ATP = L-seryl-tRNA(Sec) + AMP + diphosphate + H(+). Its pathway is aminoacyl-tRNA biosynthesis; selenocysteinyl-tRNA(Sec) biosynthesis; L-seryl-tRNA(Sec) from L-serine and tRNA(Sec): step 1/1. Its function is as follows. Catalyzes the attachment of serine to tRNA(Ser). Is also able to aminoacylate tRNA(Sec) with serine, to form the misacylated tRNA L-seryl-tRNA(Sec), which will be further converted into selenocysteinyl-tRNA(Sec). In Roseobacter denitrificans (strain ATCC 33942 / OCh 114) (Erythrobacter sp. (strain OCh 114)), this protein is Serine--tRNA ligase.